Reading from the N-terminus, the 92-residue chain is Small ribosomal subunit protein uS19 (92 aa).

This sequence belongs to the universal ribosomal protein uS19 family.

Functionally, protein S19 forms a complex with S13 that binds strongly to the 16S ribosomal RNA. This is Small ribosomal subunit protein uS19 (rpsS) from Synechocystis sp. (strain ATCC 27184 / PCC 6803 / Kazusa).